The chain runs to 435 residues: Tol-Pal system protein TolB (435 aa).

Residues 1–26 (MKTFSLLRILIVLVGMAGAFATPAMA) form the signal peptide.

It belongs to the TolB family. In terms of assembly, the Tol-Pal system is composed of five core proteins: the inner membrane proteins TolA, TolQ and TolR, the periplasmic protein TolB and the outer membrane protein Pal. They form a network linking the inner and outer membranes and the peptidoglycan layer.

The protein resides in the periplasm. In terms of biological role, part of the Tol-Pal system, which plays a role in outer membrane invagination during cell division and is important for maintaining outer membrane integrity. This chain is Tol-Pal system protein TolB, found in Allorhizobium ampelinum (strain ATCC BAA-846 / DSM 112012 / S4) (Agrobacterium vitis (strain S4)).